Reading from the N-terminus, the 229-residue chain is 2,3-bisphosphoglycerate-dependent phosphoglycerate mutase (229 aa).

Substrate is bound by residues 8–15 (RHGESAWN), 21–22 (TG), Arg-60, 87–90 (ERHY), Lys-98, 114–115 (RR), and 183–184 (GN). Catalysis depends on His-9, which acts as the Tele-phosphohistidine intermediate. Catalysis depends on Glu-87, which acts as the Proton donor/acceptor.

This sequence belongs to the phosphoglycerate mutase family. BPG-dependent PGAM subfamily. As to quaternary structure, homodimer.

The enzyme catalyses (2R)-2-phosphoglycerate = (2R)-3-phosphoglycerate. It participates in carbohydrate degradation; glycolysis; pyruvate from D-glyceraldehyde 3-phosphate: step 3/5. Functionally, catalyzes the interconversion of 2-phosphoglycerate and 3-phosphoglycerate. The sequence is that of 2,3-bisphosphoglycerate-dependent phosphoglycerate mutase from Polynucleobacter necessarius subsp. necessarius (strain STIR1).